Here is a 158-residue protein sequence, read N- to C-terminus: Protein Smg homolog (158 aa).

It belongs to the Smg family.

The protein is Protein Smg homolog of Shewanella sp. (strain ANA-3).